A 336-amino-acid polypeptide reads, in one-letter code: Electron transfer flavoprotein subunit alpha (336 aa).

Residue 275–303 participates in FAD binding; it reads LYIACGISGAIQHLAGMQDSDYIIAINKD.

Belongs to the ETF alpha-subunit/FixB family. As to quaternary structure, heterodimer of an alpha and a beta subunit. FAD serves as cofactor.

The electron transfer flavoprotein serves as a specific electron acceptor for other dehydrogenases. It transfers the electrons to the main respiratory chain via ETF-ubiquinone oxidoreductase (ETF dehydrogenase). This Clostridium acetobutylicum (strain ATCC 824 / DSM 792 / JCM 1419 / IAM 19013 / LMG 5710 / NBRC 13948 / NRRL B-527 / VKM B-1787 / 2291 / W) protein is Electron transfer flavoprotein subunit alpha (etfA).